The primary structure comprises 135 residues: UPF0299 membrane protein PC1_1498 (135 aa).

Transmembrane regions (helical) follow at residues 5-25, 30-50, 63-83, and 93-113; these read FIVC…LLAG, ALLP…FTLL, GCHL…VGVM, and FGPI…VVGF.

It belongs to the UPF0299 family.

It is found in the cell inner membrane. The polypeptide is UPF0299 membrane protein PC1_1498 (Pectobacterium carotovorum subsp. carotovorum (strain PC1)).